The following is a 320-amino-acid chain: Acyl-coenzyme A thioesterase 8 (320 aa).

Catalysis depends on charge relay system residues Asp233, Ser255, and Gln305. Residues Ser318–Leu320 carry the Microbody targeting signal motif.

The protein belongs to the C/M/P thioester hydrolase family. As to quaternary structure, homodimer.

It is found in the peroxisome matrix. The catalysed reaction is choloyl-CoA + H2O = cholate + CoA + H(+). The enzyme catalyses chenodeoxycholoyl-CoA + H2O = chenodeoxycholate + CoA + H(+). It carries out the reaction acetyl-CoA + H2O = acetate + CoA + H(+). It catalyses the reaction butanoyl-CoA + H2O = butanoate + CoA + H(+). The catalysed reaction is hexanoyl-CoA + H2O = hexanoate + CoA + H(+). The enzyme catalyses octanoyl-CoA + H2O = octanoate + CoA + H(+). It carries out the reaction decanoyl-CoA + H2O = decanoate + CoA + H(+). It catalyses the reaction dodecanoyl-CoA + H2O = dodecanoate + CoA + H(+). The catalysed reaction is tetradecanoyl-CoA + H2O = tetradecanoate + CoA + H(+). The enzyme catalyses 4,8-dimethylnonanoyl-CoA + H2O = 4,8-dimethylnonanoate + CoA + H(+). It carries out the reaction 2,6-dimethylheptanoyl-CoA + H2O = 2,6-dimethylheptanoate + CoA + H(+). It catalyses the reaction malonyl-CoA + H2O = malonate + CoA + H(+). The catalysed reaction is acetoacetyl-CoA + H2O = acetoacetate + CoA + H(+). The enzyme catalyses propanoyl-CoA + H2O = propanoate + CoA + H(+). It carries out the reaction succinyl-CoA + H2O = succinate + CoA + H(+). It catalyses the reaction glutaryl-CoA + H2O = glutarate + CoA + H(+). The catalysed reaction is hexanedioyl-CoA + H2O = hexanedioate + CoA + H(+). The enzyme catalyses octanedioyl-CoA + H2O = octanedioate + CoA + H(+). It carries out the reaction decanedioyl-CoA + H2O = decanedioate + CoA + H(+). It catalyses the reaction dodecanedioyl-CoA + H2O = dodecanedioate + CoA + H(+). The catalysed reaction is (9Z)-tetradecenoyl-CoA + H2O = (9Z)-tetradecenoate + CoA + H(+). The enzyme catalyses hexadecanoyl-CoA + H2O = hexadecanoate + CoA + H(+). It carries out the reaction (9Z)-hexadecenoyl-CoA + H2O = (9Z)-hexadecenoate + CoA + H(+). It catalyses the reaction octadecanoyl-CoA + H2O = octadecanoate + CoA + H(+). The catalysed reaction is (9Z)-octadecenoyl-CoA + H2O = (9Z)-octadecenoate + CoA + H(+). The enzyme catalyses (9Z,12Z)-octadecadienoyl-CoA + H2O = (9Z,12Z)-octadecadienoate + CoA + H(+). It carries out the reaction eicosanoyl-CoA + H2O = eicosanoate + CoA + H(+). It catalyses the reaction (5Z,8Z,11Z,14Z)-eicosatetraenoyl-CoA + H2O = (5Z,8Z,11Z,14Z)-eicosatetraenoate + CoA + H(+). The catalysed reaction is (3S)-3-hydroxy-3-methylglutaryl-CoA + H2O = 3-hydroxy-3-methylglutarate + CoA + H(+). The enzyme catalyses 3alpha,7alpha,12alpha-trihydroxy-5beta-cholestan-26-oyl-CoA + H2O = 3alpha,7alpha,12alpha-trihydroxy-5beta-cholestan-26-oate + CoA + H(+). It carries out the reaction 2-methyloctadecanoyl-CoA + H2O = 2-methyloctadecanoate + CoA + H(+). It catalyses the reaction prostaglandin F2alpha-CoA + H2O = prostaglandin F2alpha + CoA + H(+). Inhibited by CoASH (IC(50)=10-15 uM). Also inhibited by cysteine-reactive agents. Functionally, catalyzes the hydrolysis of acyl-CoAs into free fatty acids and coenzyme A (CoASH), regulating their respective intracellular levels. Displays no strong substrate specificity with respect to the carboxylic acid moiety of Acyl-CoAs. Hydrolyzes medium length (C2 to C20) straight-chain, saturated and unsaturated acyl-CoAS but is inactive towards substrates with longer aliphatic chains. Moreover, it catalyzes the hydrolysis of CoA esters of bile acids, such as choloyl-CoA and chenodeoxycholoyl-CoA and competes with bile acid CoA:amino acid N-acyltransferase (BAAT). Is also able to hydrolyze CoA esters of dicarboxylic acids. It is involved in the metabolic regulation of peroxisome proliferation. In Rattus norvegicus (Rat), this protein is Acyl-coenzyme A thioesterase 8 (Acot8).